The sequence spans 542 residues: Glutamyl-tRNA(Gln) amidotransferase subunit B, mitochondrial (542 aa).

It belongs to the GatB/GatE family. GatB subfamily. As to quaternary structure, subunit of the heterotrimeric GatFAB amidotransferase (AdT) complex, composed of A, B and F subunits.

It localises to the mitochondrion. The enzyme catalyses L-glutamyl-tRNA(Gln) + L-glutamine + ATP + H2O = L-glutaminyl-tRNA(Gln) + L-glutamate + ADP + phosphate + H(+). Functionally, allows the formation of correctly charged Gln-tRNA(Gln) through the transamidation of misacylated Glu-tRNA(Gln) in the mitochondria. The reaction takes place in the presence of glutamine and ATP through an activated gamma-phospho-Glu-tRNA(Gln). This Candida glabrata (strain ATCC 2001 / BCRC 20586 / JCM 3761 / NBRC 0622 / NRRL Y-65 / CBS 138) (Yeast) protein is Glutamyl-tRNA(Gln) amidotransferase subunit B, mitochondrial.